We begin with the raw amino-acid sequence, 93 residues long: Non-histone chromosomal protein 6A (93 aa).

Disordered stretches follow at residues 1-23 (MVTP…APKR) and 69-93 (PYEA…ATLA). A compositionally biased stretch (basic residues) spans 7–16 (PKKRTTRKKK). Residues 21-89 (PKRALSAYMF…RYESEKELYN (69 aa)) constitute a DNA-binding region (HMG box). Over residues 69–87 (PYEAKAQADKKRYESEKEL) the composition is skewed to basic and acidic residues.

Belongs to the NHP6 family. Weakly associates with the stable SPT16-POB3 heterodimer to form the FACT (yFACT or SNP) complex, which is associated with nucleosomes. Multiple molecules of NHP6 (NHP6A and/or NHP6B) are required to recruit the SPT16-POB3 heterodimer to DNA.

It localises to the nucleus. It is found in the chromosome. In terms of biological role, DNA-binding protein that induces severe bending of DNA. Required for DNA-binding by the FACT complex, a general chromatin factor that acts to reorganize nucleosomes. The FACT complex is involved in multiple processes that require DNA as a template such as mRNA elongation, DNA replication and DNA repair. Also augments the fidelity of transcription by RNA polymerase III independently of any role in the FACT complex. Required for transcriptional initiation fidelity of some but not all tRNA genes. Seems to be functionally redundant with NHP6B. This is Non-histone chromosomal protein 6A (NHP6A) from Saccharomyces cerevisiae (strain ATCC 204508 / S288c) (Baker's yeast).